The following is a 218-amino-acid chain: Large ribosomal subunit protein uL3 (218 aa).

Positions 127 to 167 (GFSRGPMSHGSKNHRLPGSIGAGTTPGRVYPGKRMAGRMGG) are disordered.

Belongs to the universal ribosomal protein uL3 family. Part of the 50S ribosomal subunit. Forms a cluster with proteins L14 and L19.

Functionally, one of the primary rRNA binding proteins, it binds directly near the 3'-end of the 23S rRNA, where it nucleates assembly of the 50S subunit. This chain is Large ribosomal subunit protein uL3, found in Prochlorococcus marinus (strain NATL1A).